The chain runs to 103 residues: Small ribosomal subunit protein uS10 (103 aa).

The protein belongs to the universal ribosomal protein uS10 family. Part of the 30S ribosomal subunit.

Its function is as follows. Involved in the binding of tRNA to the ribosomes. In Shewanella halifaxensis (strain HAW-EB4), this protein is Small ribosomal subunit protein uS10.